We begin with the raw amino-acid sequence, 428 residues long: Histidinol dehydrogenase (428 aa).

NAD(+) is bound by residues Y126, Q188, and N211. Substrate contacts are provided by S234, Q256, and H259. Positions 256 and 259 each coordinate Zn(2+). Catalysis depends on proton acceptor residues E324 and H325. Residues H325, D358, E412, and H417 each coordinate substrate. Residue D358 participates in Zn(2+) binding. H417 lines the Zn(2+) pocket.

Belongs to the histidinol dehydrogenase family. The cofactor is Zn(2+).

The enzyme catalyses L-histidinol + 2 NAD(+) + H2O = L-histidine + 2 NADH + 3 H(+). It participates in amino-acid biosynthesis; L-histidine biosynthesis; L-histidine from 5-phospho-alpha-D-ribose 1-diphosphate: step 9/9. Catalyzes the sequential NAD-dependent oxidations of L-histidinol to L-histidinaldehyde and then to L-histidine. The polypeptide is Histidinol dehydrogenase (Chlorobaculum tepidum (strain ATCC 49652 / DSM 12025 / NBRC 103806 / TLS) (Chlorobium tepidum)).